Reading from the N-terminus, the 394-residue chain is Putative gustatory receptor 22a (394 aa).

At 1–16 (MSQPKRIHRICKGLAR) the chain is on the cytoplasmic side. A helical transmembrane segment spans residues 17–37 (FTIRATLYGSWVLGLFPFTFD). The Extracellular portion of the chain corresponds to 38 to 47 (SRKRRLNRSK). Asn-44 is a glycosylation site (N-linked (GlcNAc...) asparagine). A helical membrane pass occupies residues 48–68 (WLLAYGLVLNLTLLVLSMLPS). At 69-148 (TDDHNSVKVE…HTFNRYVIEK (80 aa)) the chain is on the cytoplasmic side. The chain crosses the membrane as a helical span at residues 149 to 169 (GLVIILEIGSSLVLYFGIPNS). A topological domain (extracellular) is located at residue Lys-170. A helical membrane pass occupies residues 171–191 (IVVYEAVCIYIVQLEVLMVVM). Over 192–256 (HFHLAVIYIY…TAIYDIQVTL (65 aa)) the chain is Cytoplasmic. The helical transmembrane segment at 257 to 277 (FMATLFSVNIIVGHVLVICWI) threads the bilayer. The N-linked (GlcNAc...) asparagine glycan is linked to Asn-278. Residues 278–281 (NITR) lie on the Extracellular side of the membrane. A helical transmembrane segment spans residues 282 to 302 (FSLLVIFLLFPQALIINFWDL). At 303–361 (WQGIAFCDLAESTGKKTSMILKLFNDMENMDQETERRVTEFTLFCSHRRLKVCHLGLLD) the chain is on the cytoplasmic side. The helical transmembrane segment at 362–382 (INYEMGFRMIITNILYVVFLV) threads the bilayer. The Extracellular portion of the chain corresponds to 383 to 394 (QFDYMNLKFKTD).

The protein belongs to the insect chemoreceptor superfamily. Gustatory receptor (GR) family. Gr22e subfamily. As to expression, expressed in neurons of the terminal external chemosensory organ of larvae.

It is found in the cell membrane. Functionally, probable gustatory receptor which mediates acceptance or avoidance behavior, depending on its substrates. The polypeptide is Putative gustatory receptor 22a (Gr22a) (Drosophila melanogaster (Fruit fly)).